An 87-amino-acid polypeptide reads, in one-letter code: NAD(P)H-quinone oxidoreductase subunit O (87 aa).

Residues methionine 1–aspartate 10 show a composition bias toward basic and acidic residues. The interval methionine 1–lysine 23 is disordered.

This sequence belongs to the complex I NdhO subunit family. As to quaternary structure, NDH-1 can be composed of about 15 different subunits; different subcomplexes with different compositions have been identified which probably have different functions.

It is found in the cellular thylakoid membrane. The catalysed reaction is a plastoquinone + NADH + (n+1) H(+)(in) = a plastoquinol + NAD(+) + n H(+)(out). It carries out the reaction a plastoquinone + NADPH + (n+1) H(+)(in) = a plastoquinol + NADP(+) + n H(+)(out). Functionally, NDH-1 shuttles electrons from an unknown electron donor, via FMN and iron-sulfur (Fe-S) centers, to quinones in the respiratory and/or the photosynthetic chain. The immediate electron acceptor for the enzyme in this species is believed to be plastoquinone. Couples the redox reaction to proton translocation, and thus conserves the redox energy in a proton gradient. Cyanobacterial NDH-1 also plays a role in inorganic carbon-concentration. The polypeptide is NAD(P)H-quinone oxidoreductase subunit O (Prochlorococcus marinus (strain NATL2A)).